The primary structure comprises 620 residues: Dopamine beta-hydroxylase (620 aa).

Residues M1–R19 are Cytoplasmic-facing. Residues E20 to L40 traverse the membrane as a helical; Signal-anchor for type II membrane protein segment. Topologically, residues Q41–H620 are intragranular. The DOMON domain occupies G60–L176. Residues N67 and N187 are each glycosylated (N-linked (GlcNAc...) asparagine). 6 disulfides stabilise this stretch: C157–C599, C235–C286, C272–C298, C393–C506, C397–C568, and C469–C491. Y233 is an active-site residue. Residues H265 and H266 each contribute to the Cu(2+) site. N274 carries an N-linked (GlcNAc...) asparagine glycan. Position 336 (H336) interacts with Cu(2+). Phosphoserine; by CaMK is present on S349. H415 is an active-site residue. Positions 415 and 417 each coordinate Cu(2+). N-linked (GlcNAc...) asparagine glycosylation is present at N475. M490 contributes to the Cu(2+) binding site. N-linked (GlcNAc...) asparagine glycosylation is found at N569 and N587.

Belongs to the copper type II ascorbate-dependent monooxygenase family. In terms of assembly, homotetramer; composed of two disulfide-linked dimers. The cofactor is Cu(2+). Post-translationally, proteolytic cleavage after the membrane-anchor leads to the release of the soluble form. N-glycosylated. Chromaffin granules of the adrenal medulla and synaptic vesicles of the sympathetic nervous system.

Its subcellular location is the cytoplasmic vesicle. It localises to the secretory vesicle lumen. The protein resides in the secretory vesicle. It is found in the chromaffin granule lumen. The protein localises to the secreted. Its subcellular location is the secretory vesicle membrane. It localises to the chromaffin granule membrane. It catalyses the reaction dopamine + 2 L-ascorbate + O2 = (R)-noradrenaline + 2 monodehydro-L-ascorbate radical + H2O. It functions in the pathway catecholamine biosynthesis; (R)-noradrenaline biosynthesis; (R)-noradrenaline from dopamine: step 1/1. Its function is as follows. Catalyzes the hydroxylation of dopamine to noradrenaline (also known as norepinephrine), and is thus vital for regulation of these neurotransmitters. This Rattus norvegicus (Rat) protein is Dopamine beta-hydroxylase (Dbh).